Here is a 439-residue protein sequence, read N- to C-terminus: Tol-Pal system protein TolB (439 aa).

A signal peptide spans 1-22 (MTKFPRWLAILVGLLFPLSALT).

The protein belongs to the TolB family. In terms of assembly, the Tol-Pal system is composed of five core proteins: the inner membrane proteins TolA, TolQ and TolR, the periplasmic protein TolB and the outer membrane protein Pal. They form a network linking the inner and outer membranes and the peptidoglycan layer.

It is found in the periplasm. In terms of biological role, part of the Tol-Pal system, which plays a role in outer membrane invagination during cell division and is important for maintaining outer membrane integrity. The polypeptide is Tol-Pal system protein TolB (Xylella fastidiosa (strain M12)).